The following is a 141-amino-acid chain: Hemoglobin subunit alpha-A (141 aa).

One can recognise a Globin domain in the interval 1–141; that stretch reads VLSASDKSNV…VGTVLTAKYR (141 aa). H58 provides a ligand contact to O2. H87 provides a ligand contact to heme b.

Belongs to the globin family. In terms of assembly, heterotetramer of two alpha chains and two beta chains. In terms of tissue distribution, red blood cells.

Functionally, involved in oxygen transport from the lung to the various peripheral tissues. This chain is Hemoglobin subunit alpha-A (HBAA), found in Streptopelia orientalis (Eastern turtle dove).